The primary structure comprises 178 residues: Cytidylate kinase (178 aa).

7–15 (GLPGTGTTT) serves as a coordination point for ATP.

The protein belongs to the cytidylate kinase family. Type 2 subfamily.

It localises to the cytoplasm. The enzyme catalyses CMP + ATP = CDP + ADP. The catalysed reaction is dCMP + ATP = dCDP + ADP. The polypeptide is Cytidylate kinase (cmk) (Methanocaldococcus jannaschii (strain ATCC 43067 / DSM 2661 / JAL-1 / JCM 10045 / NBRC 100440) (Methanococcus jannaschii)).